The following is a 551-amino-acid chain: Putative ABC transporter ATP-binding protein BA_3364/GBAA_3364/BAS3118 (551 aa).

ABC transporter domains are found at residues 5 to 243 (AEIK…FRPF) and 293 to 525 (LSAE…SINR). Residues 39 to 46 (GGSGSGKT) and 327 to 334 (GKNGTGKS) contribute to the ATP site.

Belongs to the ABC transporter superfamily.

The protein resides in the cell membrane. Probably part of an ABC transporter complex. Responsible for energy coupling to the transport system. The sequence is that of Putative ABC transporter ATP-binding protein BA_3364/GBAA_3364/BAS3118 from Bacillus anthracis.